The sequence spans 365 residues: Phosphoserine aminotransferase (365 aa).

Arginine 40 contributes to the L-glutamate binding site. Pyridoxal 5'-phosphate is bound by residues 74 to 75 (AS), phenylalanine 99, threonine 155, aspartate 177, and glutamine 200. Lysine 201 carries the N6-(pyridoxal phosphate)lysine modification. 241–242 (NT) contacts pyridoxal 5'-phosphate.

It belongs to the class-V pyridoxal-phosphate-dependent aminotransferase family. SerC subfamily. In terms of assembly, homodimer. Pyridoxal 5'-phosphate serves as cofactor.

The protein resides in the cytoplasm. It carries out the reaction O-phospho-L-serine + 2-oxoglutarate = 3-phosphooxypyruvate + L-glutamate. The catalysed reaction is 4-(phosphooxy)-L-threonine + 2-oxoglutarate = (R)-3-hydroxy-2-oxo-4-phosphooxybutanoate + L-glutamate. The protein operates within amino-acid biosynthesis; L-serine biosynthesis; L-serine from 3-phospho-D-glycerate: step 2/3. In terms of biological role, catalyzes the reversible conversion of 3-phosphohydroxypyruvate to phosphoserine and of 3-hydroxy-2-oxo-4-phosphonooxybutanoate to phosphohydroxythreonine. The chain is Phosphoserine aminotransferase from Lactococcus lactis subsp. cremoris (strain MG1363).